A 158-amino-acid polypeptide reads, in one-letter code: Transcription elongation factor GreA (158 aa).

Belongs to the GreA/GreB family.

In terms of biological role, necessary for efficient RNA polymerase transcription elongation past template-encoded arresting sites. The arresting sites in DNA have the property of trapping a certain fraction of elongating RNA polymerases that pass through, resulting in locked ternary complexes. Cleavage of the nascent transcript by cleavage factors such as GreA or GreB allows the resumption of elongation from the new 3'terminus. GreA releases sequences of 2 to 3 nucleotides. The polypeptide is Transcription elongation factor GreA (Psychrobacter sp. (strain PRwf-1)).